Consider the following 458-residue polypeptide: cAMP-dependent protein kinase regulatory subunit (458 aa).

A dimerization and phosphorylation region spans residues 28-222 (QFAANYFNKK…GLESAVGKNF (195 aa)). Residue Ser-184 is modified to Phosphoserine. 3',5'-cyclic AMP-binding positions include 223–338 (LFNK…FLKS), Glu-288, Arg-297, 341–457 (LLKS…RADK), Glu-407, and Arg-416.

It belongs to the cAMP-dependent kinase regulatory chain family. Tetramer, composed of 2 regulatory (R) and 2 catalytic (C) subunits. In the presence of cAMP it dissociates into 2 active monomeric C subunits and an R dimer.

This is cAMP-dependent protein kinase regulatory subunit (PKAR) from Eremothecium gossypii (strain ATCC 10895 / CBS 109.51 / FGSC 9923 / NRRL Y-1056) (Yeast).